We begin with the raw amino-acid sequence, 956 residues long: Ubiquitin carboxyl-terminal hydrolase CYLD (956 aa).

The interaction with TRIP stretch occupies residues 106-593 (CEERFSLFKN…LEIMIGKKKG (488 aa)). CAP-Gly domains lie at 153 to 198 (LAER…VFVA) and 253 to 286 (DVLPGKESLGYFVGVDMDNPIGNWDGRFDGVQLC). A disordered region spans residues 309–353 (SVTQERRPPKLAFMSRGVGDKGSSSHNKPKATGSTSDPGNRNRSE). Positions 330–349 (GSSSHNKPKATGSTSDPGNR) are enriched in polar residues. Serine 387 carries the post-translational modification Phosphoserine. The tract at residues 392–411 (STDFDRSSPPLQPPPVNSLT) is disordered. Residues 394 to 469 (DFDRSSPPLQ…LAMPPGNSHG (76 aa)) are interaction with TRAF2. Residues serine 418 and serine 422 each carry the phosphoserine modification. The segment at 470 to 554 (LEVGSLAEVK…FASLQPVSNQ (85 aa)) is interaction with IKBKG/NEMO. The CAP-Gly 3 domain occupies 492-535 (GQPPGLNEVLAGLELEDECAGCTDGTFRGTRYFTCALKKALFVK). Residues 592 to 950 (KGIQGHYNSC…DAYMCMYQSP (359 aa)) form the USP domain. The active-site Nucleophile is cysteine 601. Positions 781–833 (LEDTPRQCRICGGLAMYECRECYDDPDISAGKIKQFCKTCNTQVHLHPKRLNH) are B-box. The Zn(2+) site is built by cysteine 788, cysteine 791, cysteine 799, cysteine 802, cysteine 817, cysteine 820, histidine 825, and histidine 833. The active-site Proton acceptor is the histidine 871.

The protein belongs to the peptidase C19 family. Interacts (via CAP-Gly domain) with IKBKG/NEMO (via proline-rich C-terminal region). Interacts with TRAF2 and TRIP. Interacts with PLK1, DVL1, DVL3, MAVS, TBK1, IKKE and RIGI. Interacts (via CAP-Gly domain) with microtubules. Interacts with HDAC6 and BCL3. Interacts with MAP3K7. Identified in a complex with TRAF6 and SQSTM1. Interacts with OPTN and SQSTM1. Interacts with CEP350. Interacts with RNF31; the interaction is indirect and is mediated via SPATA2. Interacts with SPATA2 (via the PUB domain); the interaction is direct and recruits CYLD to the LUBAC complex, thereby regulating TNF-alpha-induced necroptosis. Post-translationally, ubiquitinated. Polyubiquitinated in hepatocytes treated with palmitic acid. Ubiquitination is mediated by E3 ligase TRIM47 and leads to proteasomal degradation. In terms of processing, phosphorylated on several serine residues by IKKA and/or IKKB in response to immune stimuli. Phosphorylation requires IKBKG. Phosphorylation abolishes TRAF2 deubiquitination, interferes with the activation of Jun kinases, and strongly reduces CD40-dependent gene activation by NF-kappa-B. As to expression, detected in fetal brain, testis, and skeletal muscle, and at a lower level in adult brain, leukocytes, liver, heart, kidney, spleen, ovary and lung. Isoform 2 is found in all tissues except kidney.

It is found in the cytoplasm. It localises to the perinuclear region. Its subcellular location is the cytoskeleton. The protein resides in the cell membrane. The protein localises to the microtubule organizing center. It is found in the centrosome. It localises to the spindle. Its subcellular location is the cilium basal body. It catalyses the reaction Thiol-dependent hydrolysis of ester, thioester, amide, peptide and isopeptide bonds formed by the C-terminal Gly of ubiquitin (a 76-residue protein attached to proteins as an intracellular targeting signal).. Its activity is regulated as follows. Inhibited by phosphorylation at serine residues. Functionally, deubiquitinase that specifically cleaves 'Lys-63'- and linear 'Met-1'-linked polyubiquitin chains and is involved in NF-kappa-B activation and TNF-alpha-induced necroptosis. Negatively regulates NF-kappa-B activation by deubiquitinating upstream signaling factors. Contributes to the regulation of cell survival, proliferation and differentiation via its effects on NF-kappa-B activation. Negative regulator of Wnt signaling. Inhibits HDAC6 and thereby promotes acetylation of alpha-tubulin and stabilization of microtubules. Plays a role in the regulation of microtubule dynamics, and thereby contributes to the regulation of cell proliferation, cell polarization, cell migration, and angiogenesis. Required for normal cell cycle progress and normal cytokinesis. Inhibits nuclear translocation of NF-kappa-B. Plays a role in the regulation of inflammation and the innate immune response, via its effects on NF-kappa-B activation. Dispensable for the maturation of intrathymic natural killer cells, but required for the continued survival of immature natural killer cells. Negatively regulates TNFRSF11A signaling and osteoclastogenesis. Involved in the regulation of ciliogenesis, allowing ciliary basal bodies to migrate and dock to the plasma membrane; this process does not depend on NF-kappa-B activation. Ability to remove linear ('Met-1'-linked) polyubiquitin chains regulates innate immunity and TNF-alpha-induced necroptosis: recruited to the LUBAC complex via interaction with SPATA2 and restricts linear polyubiquitin formation on target proteins. Regulates innate immunity by restricting linear polyubiquitin formation on RIPK2 in response to NOD2 stimulation. Involved in TNF-alpha-induced necroptosis by removing linear ('Met-1'-linked) polyubiquitin chains from RIPK1, thereby regulating the kinase activity of RIPK1. Negatively regulates intestinal inflammation by removing 'Lys-63' linked polyubiquitin chain of NLRP6, thereby reducing the interaction between NLRP6 and PYCARD/ASC and formation of the NLRP6 inflammasome. Does not catalyze deubiquitination of heterotypic 'Lys-63'-/'Lys-48'-linked branched ubiquitin chains. Removes 'Lys-63' linked polyubiquitin chain of MAP3K7, which inhibits phosphorylation and blocks downstream activation of the JNK-p38 kinase cascades. Also removes 'Lys-63'-linked polyubiquitin chains of MAP3K1 and MA3P3K3, which inhibit their interaction with MAP2K1 and MAP2K2. The sequence is that of Ubiquitin carboxyl-terminal hydrolase CYLD from Homo sapiens (Human).